We begin with the raw amino-acid sequence, 238 residues long: MPCTHCRTPNGTSSSATWRTARPAPRRCGSCRPPPPGSASPSPRPRRASCATGCCGRSRPYARRLRRPADGHGPAGGGRTGRWYAYALAACVAAAAAFGGVAVWQNQVAQDARQQANQAQRQNERLAQVLSAPDAKTASSELTGGAHGTVVVSQSQNRAVFLASGMAPPPSGKVYQIWFNDEGTMRSAGLMDPKASDDAVLLNGPVDRASGMGITVEPAGGSAEPTSDPVALMNFPTA.

Disordered stretches follow at residues 1–51 (MPCT…ASCA) and 214–238 (ITVEPAGGSAEPTSDPVALMNFPTA). Low complexity predominate over residues 16–31 (ATWRTARPAPRRCGSC).

This is an uncharacterized protein from Streptomyces griseus.